The sequence spans 351 residues: Peptide chain release factor 1 (351 aa).

Q229 bears the N5-methylglutamine mark.

It belongs to the prokaryotic/mitochondrial release factor family. In terms of processing, methylated by PrmC. Methylation increases the termination efficiency of RF1.

It is found in the cytoplasm. Peptide chain release factor 1 directs the termination of translation in response to the peptide chain termination codons UAG and UAA. This is Peptide chain release factor 1 from Dinoroseobacter shibae (strain DSM 16493 / NCIMB 14021 / DFL 12).